A 154-amino-acid chain; its full sequence is 3-hydroxyacyl-[acyl-carrier-protein] dehydratase FabZ (154 aa).

H60 is a catalytic residue.

Belongs to the thioester dehydratase family. FabZ subfamily.

The protein resides in the cytoplasm. It carries out the reaction a (3R)-hydroxyacyl-[ACP] = a (2E)-enoyl-[ACP] + H2O. Involved in unsaturated fatty acids biosynthesis. Catalyzes the dehydration of short chain beta-hydroxyacyl-ACPs and long chain saturated and unsaturated beta-hydroxyacyl-ACPs. The protein is 3-hydroxyacyl-[acyl-carrier-protein] dehydratase FabZ of Actinobacillus pleuropneumoniae serotype 5b (strain L20).